The primary structure comprises 412 residues: Esterase EstD (412 aa).

Positions 1–20 (MRLTVFLSLFLGVMVFGAFD) are cleaved as a signal peptide. Residue S243 is the Nucleophile of the active site. Catalysis depends on charge relay system residues D347 and H378.

It belongs to the AB hydrolase superfamily. Esterase 10 family. As to quaternary structure, exists mainly as a monomer and, to some extent as a dimer.

It carries out the reaction a carboxylic ester + H2O = an alcohol + a carboxylate + H(+). With respect to regulation, is strongly inhibited by phenylmethylsulfonyl fluoride, a serine protease inhibitor, and by mercury chloride. Diethyl pyrocarbonate, a histidine modifier, also inhibits the reaction, albeit less pronounced than phenylmethylsulfonyl fluoride. EDTA and dithiothreitol have no effect on enzyme activity. Functionally, exhibits significant esterase activity with a preference for short acyl chain esters (C4-C8) in vitro. Its physiological function is not known. Displays neither proteolytic activity using casein as substrate, nor peptidase activity when assayed with L-leucine p-nitroanilide and L-proline p-nitroanilide. The sequence is that of Esterase EstD from Thermotoga maritima (strain ATCC 43589 / DSM 3109 / JCM 10099 / NBRC 100826 / MSB8).